Consider the following 414-residue polypeptide: MEQPSPVTRQSFDEWLVPTYAPADFIVVRGEGSTLWDQQGKSYIDFAGGIAVNALGHGHPAVRAALIEQADKVWHLGNGYTNEPVLRLAKQLIDATFAEKVFFCNSGAEANEAALKLARKYALDNFANKAGQQGEKNQIVAFRNAFHGRTLFTVSAGGQPKYSQDFAPLPGGIHHGIFNDLASAEHLITDQTCAVIVEPIQGEGGVLPADKEFLHGLRALCDRHNALLIFDEIQTGVGRTGELYAYMHYGVSPDVLTSAKALGGGFPIGAMLTTTKYASALSVGSHGTTFGGNPLACAVAGTVLSLINQPTLLAGVKARHQWFIDELAEINARHNVFAEIRGRGLLIGCVLNAQYAGKSKEIVQAAAQYGLIALIAGPDVVRFAPSLIISPKEIKEGLARLAMGIEQVCQKVTS.

Position 260 is an N6-(pyridoxal phosphate)lysine (lysine 260).

Belongs to the class-III pyridoxal-phosphate-dependent aminotransferase family. AstC subfamily. Pyridoxal 5'-phosphate is required as a cofactor.

It catalyses the reaction N(2)-succinyl-L-ornithine + 2-oxoglutarate = N-succinyl-L-glutamate 5-semialdehyde + L-glutamate. It functions in the pathway amino-acid degradation; L-arginine degradation via AST pathway; L-glutamate and succinate from L-arginine: step 3/5. Its function is as follows. Catalyzes the transamination of N(2)-succinylornithine and alpha-ketoglutarate into N(2)-succinylglutamate semialdehyde and glutamate. Can also act as an acetylornithine aminotransferase. The chain is Succinylornithine transaminase from Yersinia pseudotuberculosis serotype I (strain IP32953).